Here is a 188-residue protein sequence, read N- to C-terminus: HGPRTase-like protein 1 (188 aa).

It belongs to the purine/pyrimidine phosphoribosyltransferase family. Archaeal HPRT subfamily.

Its function is as follows. May catalyze a purine salvage reaction, the substrate is unknown. The polypeptide is HGPRTase-like protein 1 (Haloferax volcanii (strain ATCC 29605 / DSM 3757 / JCM 8879 / NBRC 14742 / NCIMB 2012 / VKM B-1768 / DS2) (Halobacterium volcanii)).